The sequence spans 100 residues: Small ribosomal subunit protein uS14c (100 aa).

This sequence belongs to the universal ribosomal protein uS14 family. As to quaternary structure, part of the 30S ribosomal subunit.

Its subcellular location is the plastid. The protein localises to the chloroplast. In terms of biological role, binds 16S rRNA, required for the assembly of 30S particles. In Capsella bursa-pastoris (Shepherd's purse), this protein is Small ribosomal subunit protein uS14c.